The sequence spans 153 residues: MVFEGHLVGTGLKVGVVVGRFNEFITSKLLGGALDGLKRHGVEEADIDVAWVPGAFEIPLIAKKMANSGKYDAVITLGTVIRGATTHYDYVCNEVAKGVASLSLQTDIPVIFGVLTTETIEQAIERAGTKAGNKGYESAVAAIEMAHLSKQWA.

5-amino-6-(D-ribitylamino)uracil contacts are provided by residues phenylalanine 21, 55 to 57 (AFE), and 79 to 81 (TVI). 84–85 (AT) serves as a coordination point for (2S)-2-hydroxy-3-oxobutyl phosphate. Histidine 87 serves as the catalytic Proton donor. Phenylalanine 112 lines the 5-amino-6-(D-ribitylamino)uracil pocket. A (2S)-2-hydroxy-3-oxobutyl phosphate-binding site is contributed by arginine 126.

Belongs to the DMRL synthase family. Forms an icosahedral capsid composed of 60 subunits, arranged as a dodecamer of pentamers.

The enzyme catalyses (2S)-2-hydroxy-3-oxobutyl phosphate + 5-amino-6-(D-ribitylamino)uracil = 6,7-dimethyl-8-(1-D-ribityl)lumazine + phosphate + 2 H2O + H(+). It functions in the pathway cofactor biosynthesis; riboflavin biosynthesis; riboflavin from 2-hydroxy-3-oxobutyl phosphate and 5-amino-6-(D-ribitylamino)uracil: step 1/2. In terms of biological role, catalyzes the formation of 6,7-dimethyl-8-ribityllumazine by condensation of 5-amino-6-(D-ribitylamino)uracil with 3,4-dihydroxy-2-butanone 4-phosphate. This is the penultimate step in the biosynthesis of riboflavin. The protein is 6,7-dimethyl-8-ribityllumazine synthase of Bacillus cereus (strain ATCC 10987 / NRS 248).